A 553-amino-acid polypeptide reads, in one-letter code: Formate--tetrahydrofolate ligase (553 aa).

56-63 provides a ligand contact to ATP; the sequence is TPKGEGKT.

The protein belongs to the formate--tetrahydrofolate ligase family.

The enzyme catalyses (6S)-5,6,7,8-tetrahydrofolate + formate + ATP = (6R)-10-formyltetrahydrofolate + ADP + phosphate. Its pathway is one-carbon metabolism; tetrahydrofolate interconversion. This Haloarcula marismortui (strain ATCC 43049 / DSM 3752 / JCM 8966 / VKM B-1809) (Halobacterium marismortui) protein is Formate--tetrahydrofolate ligase.